The following is a 719-amino-acid chain: Glutathionylspermidine synthase (719 aa).

The 147-residue stretch at 54–200 (CLPLSSFERK…TESGEVELLD (147 aa)) folds into the Peptidase C51 domain. Arg-350 lines the glutathione pocket. 350 to 352 (RFD) serves as a coordination point for ATP. Mg(2+) contacts are provided by Asp-352, Glu-364, and Asn-366. Position 369 (Ser-369) interacts with glutathione. Position 432 (Glu-432) interacts with spermidine. Residues Glu-433 and Thr-501 each coordinate glutathione. ATP contacts are provided by residues Lys-544, Lys-579, Gly-586, Gln-653, and 689-691 (KIT).

It in the C-terminal section; belongs to the glutathionylspermidine synthase preATP-grasp family. The cofactor is Mg(2+). In terms of processing, the N-terminus is blocked.

The enzyme catalyses spermidine + glutathione + ATP = glutathionylspermidine + ADP + phosphate + H(+). Functionally, conjugates glutathione (gamma-Glu-Cys-Gly) and spermidine to form glutathionylspermidine in the biosynthesis trypanothione (N(1),N(8)-bis(glutathionyl)spermidine), which is involved in maintaining intracellular thiol redox and in defense against oxidants. The protein is Glutathionylspermidine synthase (GSP) of Crithidia fasciculata.